A 371-amino-acid chain; its full sequence is uncharacterized protein (371 aa).

The stretch at 287–323 (EVVTALDRYRQHLRETRERLEEKQGKLLEELKGYESM) forms a coiled coil.

This is an uncharacterized protein from Aspergillus fumigatus (strain ATCC MYA-4609 / CBS 101355 / FGSC A1100 / Af293) (Neosartorya fumigata).